We begin with the raw amino-acid sequence, 134 residues long: Translation initiation factor 2 subunit beta (134 aa).

Basic and acidic residues predominate over residues 1–12 (MEYDDMLDRAME). Residues 1–28 (MEYDDMLDRAMEETPEIDGTSERFEVPD) are disordered.

It belongs to the eIF-2-beta/eIF-5 family. Heterotrimer composed of an alpha, a beta and a gamma chain.

Its function is as follows. eIF-2 functions in the early steps of protein synthesis by forming a ternary complex with GTP and initiator tRNA. This Haloarcula marismortui (strain ATCC 43049 / DSM 3752 / JCM 8966 / VKM B-1809) (Halobacterium marismortui) protein is Translation initiation factor 2 subunit beta.